A 165-amino-acid polypeptide reads, in one-letter code: Phosphopantetheine adenylyltransferase (165 aa).

Serine 10 is a substrate binding site. Residues 10 to 11 (SF) and histidine 18 each bind ATP. Residues lysine 42, threonine 79, and arginine 93 each contribute to the substrate site. Residues 94–96 (GLR), glutamate 104, and 129–135 (VRPITAT) contribute to the ATP site.

The protein belongs to the bacterial CoaD family. In terms of assembly, homohexamer. Requires Mg(2+) as cofactor.

It localises to the cytoplasm. It carries out the reaction (R)-4'-phosphopantetheine + ATP + H(+) = 3'-dephospho-CoA + diphosphate. The protein operates within cofactor biosynthesis; coenzyme A biosynthesis; CoA from (R)-pantothenate: step 4/5. Reversibly transfers an adenylyl group from ATP to 4'-phosphopantetheine, yielding dephospho-CoA (dPCoA) and pyrophosphate. This is Phosphopantetheine adenylyltransferase from Nitrobacter winogradskyi (strain ATCC 25391 / DSM 10237 / CIP 104748 / NCIMB 11846 / Nb-255).